A 377-amino-acid chain; its full sequence is Alanine racemase (377 aa).

Lys37 serves as the catalytic Proton acceptor; specific for D-alanine. At Lys37 the chain carries N6-(pyridoxal phosphate)lysine. Arg135 provides a ligand contact to substrate. The active-site Proton acceptor; specific for L-alanine is the Tyr271. Residue Met319 participates in substrate binding.

It belongs to the alanine racemase family. Requires pyridoxal 5'-phosphate as cofactor.

The enzyme catalyses L-alanine = D-alanine. The protein operates within amino-acid biosynthesis; D-alanine biosynthesis; D-alanine from L-alanine: step 1/1. Catalyzes the interconversion of L-alanine and D-alanine. May also act on other amino acids. The protein is Alanine racemase (alr) of Helicobacter pylori (strain J99 / ATCC 700824) (Campylobacter pylori J99).